We begin with the raw amino-acid sequence, 31 residues long: Fibrinogen beta chain (31 aa).

Residues 1–10 show a composition bias toward acidic residues; it reads HYYDDTDEEE. The interval 1-31 is disordered; that stretch reads HYYDDTDEEERIVSTVDARGHRPLDKKREEA. A Sulfotyrosine; partial modification is found at Y2. Y3 carries the post-translational modification Sulfotyrosine. Residues 18–31 are compositionally biased toward basic and acidic residues; the sequence is ARGHRPLDKKREEA.

As to quaternary structure, heterohexamer; disulfide linked. Contains 2 sets of 3 non-identical chains (alpha, beta and gamma). The 2 heterotrimers are in head to head conformation with the N-termini in a small central domain. Conversion of fibrinogen to fibrin is triggered by thrombin, which cleaves fibrinopeptides A and B from alpha and beta chains, and thus exposes the N-terminal polymerization sites responsible for the formation of the soft clot.

It localises to the secreted. Cleaved by the protease thrombin to yield monomers which, together with fibrinogen alpha (FGA) and fibrinogen gamma (FGG), polymerize to form an insoluble fibrin matrix. Fibrin has a major function in hemostasis as one of the primary components of blood clots. In addition, functions during the early stages of wound repair to stabilize the lesion and guide cell migration during re-epithelialization. Was originally thought to be essential for platelet aggregation, based on in vitro studies using anticoagulated blood. However subsequent studies have shown that it is not absolutely required for thrombus formation in vivo. Enhances expression of SELP in activated platelets. Maternal fibrinogen is essential for successful pregnancy. Fibrin deposition is also associated with infection, where it protects against IFNG-mediated hemorrhage. May also facilitate the antibacterial immune response via both innate and T-cell mediated pathways. In Canis lupus familiaris (Dog), this protein is Fibrinogen beta chain (FGB).